Reading from the N-terminus, the 216-residue chain is Protein shisa-5 (216 aa).

The signal sequence occupies residues 1–26; sequence MAAPAPAPRILVLLLLLLPAPEGAQS. At 27-93 the chain is on the extracellular side; it reads ELCMISHGRK…SGFDSDPVAR (67 aa). Residues 94–114 traverse the membrane as a helical segment; that stretch reads FGTVIAIGVTLFVIAVVTVIV. The Cytoplasmic portion of the chain corresponds to 115–216; sequence CCTCSCCCLY…AYMEPPKAVP (102 aa).

It belongs to the shisa family. Interacts with PDCD6; PDCD6 can stabilize SHISA5.

It is found in the endoplasmic reticulum membrane. It localises to the nucleus membrane. Can induce apoptosis in a caspase-dependent manner and plays a role in p53/TP53-dependent apoptosis. This chain is Protein shisa-5 (SHISA5), found in Bos taurus (Bovine).